The sequence spans 372 residues: Ciliary neurotrophic factor receptor subunit alpha (372 aa).

The first 22 residues, 1–22 (MAASVPWACCAVLAAAAAAVYT), serve as a signal peptide directing secretion. The Ig-like C2-type domain maps to 27-104 (PQEAPHVQYE…WHLRHQVLLH (78 aa)). An intrachain disulfide couples Cys-46 to Cys-89. 5 N-linked (GlcNAc...) asparagine glycosylation sites follow: Asn-60, Asn-70, Asn-142, Asn-190, and Asn-261. 2 consecutive Fibronectin type-III domains span residues 108 to 205 (PPRE…VKPD) and 206 to 306 (PPEN…TEEP). The short motif at 290 to 294 (WSDWS) is the WSXWS motif element. A disordered region spans residues 301–339 (PWTEEPRHLTTEAQAPETTTSTTSSLAPPPTTKICDPGE). Positions 311 to 326 (TEAQAPETTTSTTSSL) are enriched in low complexity. Ser-342 is lipidated: GPI-anchor amidated serine. A propeptide spans 343–372 (GGGPSIPFLTSVPVTLVLAAAAATANNLLI) (removed in mature form).

The protein belongs to the type I cytokine receptor family. Type 3 subfamily. As to quaternary structure, forms a heterotrimer with LIFR and IL6ST. Interacts with heterodimeric neurotropic cytokine composed of CLCF1/CLC and CRLF1/CLF-1. Either alone or in complex with the heterodimer CLCF1-CRLF1 interacts with SORL1; this interaction may promote internalization and lysosomal degradation. Nervous system.

It is found in the cell membrane. In terms of biological role, binds to CNTF. The alpha subunit provides the receptor specificity. The sequence is that of Ciliary neurotrophic factor receptor subunit alpha (Cntfr) from Rattus norvegicus (Rat).